A 292-amino-acid chain; its full sequence is UDP-3-O-acyl-N-acetylglucosamine deacetylase (292 aa).

Zn(2+) is bound by residues H76, H232, and D236. H259 functions as the Proton donor in the catalytic mechanism.

Belongs to the LpxC family. Zn(2+) is required as a cofactor.

The enzyme catalyses a UDP-3-O-[(3R)-3-hydroxyacyl]-N-acetyl-alpha-D-glucosamine + H2O = a UDP-3-O-[(3R)-3-hydroxyacyl]-alpha-D-glucosamine + acetate. It participates in glycolipid biosynthesis; lipid IV(A) biosynthesis; lipid IV(A) from (3R)-3-hydroxytetradecanoyl-[acyl-carrier-protein] and UDP-N-acetyl-alpha-D-glucosamine: step 2/6. Its function is as follows. Catalyzes the hydrolysis of UDP-3-O-myristoyl-N-acetylglucosamine to form UDP-3-O-myristoylglucosamine and acetate, the committed step in lipid A biosynthesis. The chain is UDP-3-O-acyl-N-acetylglucosamine deacetylase from Thermodesulfovibrio yellowstonii (strain ATCC 51303 / DSM 11347 / YP87).